The sequence spans 282 residues: Small ribosomal subunit protein uS2 (282 aa).

A disordered region spans residues 245 to 265; the sequence is AEEAVEELPLPTGEAQDEASS.

The protein belongs to the universal ribosomal protein uS2 family.

The sequence is that of Small ribosomal subunit protein uS2 from Chlamydia trachomatis serovar A (strain ATCC VR-571B / DSM 19440 / HAR-13).